We begin with the raw amino-acid sequence, 174 residues long: Large ribosomal subunit protein uL10 (174 aa).

It belongs to the universal ribosomal protein uL10 family. Part of the ribosomal stalk of the 50S ribosomal subunit. The N-terminus interacts with L11 and the large rRNA to form the base of the stalk. The C-terminus forms an elongated spine to which L12 dimers bind in a sequential fashion forming a multimeric L10(L12)X complex.

Its function is as follows. Forms part of the ribosomal stalk, playing a central role in the interaction of the ribosome with GTP-bound translation factors. The protein is Large ribosomal subunit protein uL10 of Anaeromyxobacter sp. (strain Fw109-5).